Here is a 193-residue protein sequence, read N- to C-terminus: Putative manganese efflux pump MntP (193 aa).

The next 6 helical transmembrane spans lie at 6 to 26 (VIFIALGLSADCFAVSIGIAC), 48 to 68 (AGMVVIGFFAGLSVIDIISAF), 71 to 91 (WIAFGLLLFIGVRMIYEALQG), 108 to 128 (LLGVAVATSIDALAVGLAFAV), 132 to 152 (NIGLAALLIGLVSLTVSFLGF), and 165 to 185 (WVGVAGGLVLVFIGLKILAEH).

The protein belongs to the MntP (TC 9.B.29) family.

It is found in the cell membrane. In terms of biological role, probably functions as a manganese efflux pump. This chain is Putative manganese efflux pump MntP, found in Dehalococcoides mccartyi (strain ATCC BAA-2100 / JCM 16839 / KCTC 5957 / BAV1).